The following is an 84-amino-acid chain: RNA-binding protein Hfq (84 aa).

The 60-residue stretch at 10 to 69 folds into the Sm domain; sequence EPFLNTLRREHVPVSIYLVNGIKLQGQIESFDQYVVLLRNTVTQMVFKHAISTIVPGRAV.

Belongs to the Hfq family. As to quaternary structure, homohexamer.

Its function is as follows. RNA chaperone that binds small regulatory RNA (sRNAs) and mRNAs to facilitate mRNA translational regulation in response to envelope stress, environmental stress and changes in metabolite concentrations. Also binds with high specificity to tRNAs. This Verminephrobacter eiseniae (strain EF01-2) protein is RNA-binding protein Hfq.